The primary structure comprises 529 residues: Fibroblast growth factor receptor-like 1 (529 aa).

A signal peptide spans 1–20 (MTRSPALLLLLLGALPSAEA). Residues 21-374 (ARGPPRMADK…SSSSTSLPWP (354 aa)) are Extracellular-facing. Ig-like C2-type domains lie at 25 to 111 (PRMA…YTLI), 143 to 233 (PRFT…YKVD), and 242 to 350 (PVLT…AFLT). A disulfide bridge connects residues C47 and C95. An N-linked (GlcNAc...) asparagine glycan is attached at N107. The disordered stretch occupies residues 116 to 151 (ISPGKESPGPGGSSGGQEDPASQQWARPRFTQPSKM). A disulfide bridge links C168 with C217. N227, N251, and N289 each carry an N-linked (GlcNAc...) asparagine glycan. C264 and C334 are disulfide-bonded. A helical transmembrane segment spans residues 375 to 395 (VVIGIPAGAVFILGTVLLWLC). Residues 396-529 (QTKKKPCAPA…RIENNGGRVS (134 aa)) are Cytoplasmic-facing. Residues 405 to 427 (ASTLPVPGHRPPGTSRERSGDKD) form a disordered region.

As to quaternary structure, interacts with FGF2 with a low affinity. Highly expressed in the kidney, brain and lung. Weakly expressed in the muscle, thymus, lymph node, stomach, intestine, colon and liver. Expressed in fetal cartilaginous structures like the nasal cartilage, the ribs and the sternum as well as in the cartilaginous rudiments of developing bones such as the vertebrae and the pelvic bone. High expression is found in the muscles of the tongue and the diaphragm.

It is found in the cell membrane. Functionally, has a negative effect on cell proliferation. In Mus musculus (Mouse), this protein is Fibroblast growth factor receptor-like 1 (Fgfrl1).